The sequence spans 515 residues: Maturase K (515 aa).

Belongs to the intron maturase 2 family. MatK subfamily.

Its subcellular location is the plastid. The protein localises to the chloroplast. Usually encoded in the trnK tRNA gene intron. Probably assists in splicing its own and other chloroplast group II introns. This is Maturase K from Trillium pusillum (Dwarf wakerobin).